The following is a 309-amino-acid chain: Methionyl-tRNA formyltransferase (309 aa).

A (6S)-5,6,7,8-tetrahydrofolate-binding site is contributed by 109-112; sequence SLLP.

Belongs to the Fmt family.

The catalysed reaction is L-methionyl-tRNA(fMet) + (6R)-10-formyltetrahydrofolate = N-formyl-L-methionyl-tRNA(fMet) + (6S)-5,6,7,8-tetrahydrofolate + H(+). Functionally, attaches a formyl group to the free amino group of methionyl-tRNA(fMet). The formyl group appears to play a dual role in the initiator identity of N-formylmethionyl-tRNA by promoting its recognition by IF2 and preventing the misappropriation of this tRNA by the elongation apparatus. This is Methionyl-tRNA formyltransferase from Clostridium novyi (strain NT).